The primary structure comprises 503 residues: Aspartyl/glutamyl-tRNA(Asn/Gln) amidotransferase subunit B (503 aa).

Belongs to the GatB/GatE family. GatB subfamily. As to quaternary structure, heterotrimer of A, B and C subunits.

The catalysed reaction is L-glutamyl-tRNA(Gln) + L-glutamine + ATP + H2O = L-glutaminyl-tRNA(Gln) + L-glutamate + ADP + phosphate + H(+). It carries out the reaction L-aspartyl-tRNA(Asn) + L-glutamine + ATP + H2O = L-asparaginyl-tRNA(Asn) + L-glutamate + ADP + phosphate + 2 H(+). Its function is as follows. Allows the formation of correctly charged Asn-tRNA(Asn) or Gln-tRNA(Gln) through the transamidation of misacylated Asp-tRNA(Asn) or Glu-tRNA(Gln) in organisms which lack either or both of asparaginyl-tRNA or glutaminyl-tRNA synthetases. The reaction takes place in the presence of glutamine and ATP through an activated phospho-Asp-tRNA(Asn) or phospho-Glu-tRNA(Gln). In Rhodococcus erythropolis (strain PR4 / NBRC 100887), this protein is Aspartyl/glutamyl-tRNA(Asn/Gln) amidotransferase subunit B.